The sequence spans 421 residues: Meiotic fizzy-related protein 1 (421 aa).

Positions 79–107 (DTPDRKSYSLSPISPQSQDMLRQPQKPKR) are disordered. Residues 86-98 (YSLSPISPQSQDM) are compositionally biased toward polar residues. 7 WD repeats span residues 123–160 (KNDF…VVQL), 164–203 (GATN…SVRS), 206–246 (GHSE…EMMK), 247–286 (VHEQ…PLHK), 289–331 (EHTA…LQNK), 333–374 (DTGS…NIAN), and 377–416 (AHTN…PKEE).

This sequence belongs to the WD repeat CDC20/Fizzy family. Interacts with mes1.

It is found in the nucleus. Meiosis-specific activator of the anaphase promoting complex/cyclosome (APC/C). Involved in cdc13 degradation. This chain is Meiotic fizzy-related protein 1 (mfr1), found in Schizosaccharomyces pombe (strain 972 / ATCC 24843) (Fission yeast).